The sequence spans 428 residues: Methyl-branched lipid omega-hydroxylase (428 aa).

Cys-379 is a binding site for heme.

Belongs to the cytochrome P450 family. Heme serves as cofactor.

It carries out the reaction a methyl-branched lipid + O2 + 2 reduced ferredoxin [iron-sulfur] cluster + 2 H(+) = an omega-hydroxy-methyl-branched lipid + H2O + 2 oxidized ferredoxin [iron-sulfur] cluster.. The catalysed reaction is cholest-4-en-3-one + 6 reduced [2Fe-2S]-[ferredoxin] + 3 O2 + 5 H(+) = (25R)-3-oxocholest-4-en-26-oate + 6 oxidized [2Fe-2S]-[ferredoxin] + 4 H2O. The protein operates within lipid metabolism; branched-chain fatty acid metabolism. Its function is as follows. Primarily hydroxylates the omega-carbon of a number of methyl-branched lipids, including (2E,6E)-farnesol, phytanate, geranylgeraniol, 15-methylpalmitate and (2E,6E)-farnesyl diphosphate. Also catalyzes the sequential oxidation of the terminal methyl of cholest-4-en-3-one into (25R)-26-hydroxycholest-4-en-3-one (alcohol), (25R)-26-oxocholest-4-en-3-one (aldehyde), to finally yield the carboxylic acid (25R)-3-oxocholest-4-en-26-oate. Also able to sequentially oxidize cholesterol itself, not only cholest-4-en-3-one. This is Methyl-branched lipid omega-hydroxylase (cyp124) from Mycobacterium bovis (strain ATCC BAA-935 / AF2122/97).